Consider the following 139-residue polypeptide: Hydrogenase maturation factor HypA (139 aa).

Ni(2+) is bound at residue histidine 2. Zn(2+)-binding residues include cysteine 75, cysteine 78, cysteine 111, and cysteine 114.

This sequence belongs to the HypA/HybF family.

In terms of biological role, involved in the maturation of [NiFe] hydrogenases. Required for nickel insertion into the metal center of the hydrogenase. In Ignicoccus hospitalis (strain KIN4/I / DSM 18386 / JCM 14125), this protein is Hydrogenase maturation factor HypA.